Here is a 155-residue protein sequence, read N- to C-terminus: Myelin basic protein (155 aa).

Positions 1–72 (MASATTSDHA…HQGARRQTDD (72 aa)) are disordered. An N-acetylalanine; in forms C1, C2, C3 and C8 modification is found at A2. Q12 bears the Deamidated glutamine; in forms C1, C2 and C3 mark. Over residues 37–49 (GSRKVPEKGKEPA) the composition is skewed to basic and acidic residues. 2 positions are modified to phosphoserine; in forms C1, C2 and C3: S73 and S84. The segment at 113 to 155 (RAHYGAAGSSKSKDGFRGRRDGSGTLSSFFKMGKKGEGSPARR) is disordered. 2 positions are modified to phosphoserine; in forms C1 and C3: S121 and S122. Residues 123–134 (KSKDGFRGRRDG) are compositionally biased toward basic and acidic residues. Residues S135, S139, and S140 each carry the phosphoserine; in forms C1, C2 and C3 modification.

The protein belongs to the myelin basic protein family. Post-translationally, several charge isomers are produced as a result of optional post-translational modifications, such as phosphorylation, deamidation and citrullination. Dogfish MBP contains four major components designated as C1, C2, C3 and C8. C1 and C3, but not C2 are phosphorylated at either Ser-121 or Ser-122; C2 is phosphorylated at 2 or 3 sites among Ser-135, Ser-139 and Ser-140. Hydroxyproline and citrulline are present but were not identified in either C1, C2 or C3, which suggests their presence in C8.

It localises to the myelin membrane. Functionally, this protein may function to maintain proper structure of myelin. The chain is Myelin basic protein (MBP) from Squalus acanthias (Spiny dogfish).